Consider the following 287-residue polypeptide: Probable 18S rRNA (guanine-N(7))-methyltransferase (287 aa).

The segment at Gly214 to Phe287 is disordered. Positions Gly217–Ser228 are enriched in acidic residues. A compositionally biased stretch (basic residues) spans Ser234–Lys245. The segment covering Lys253–Phe278 has biased composition (basic and acidic residues).

The protein belongs to the class I-like SAM-binding methyltransferase superfamily. BUD23/WBSCR22 family.

The protein resides in the nucleus. It is found in the nucleoplasm. Its subcellular location is the cytoplasm. It localises to the perinuclear region. It carries out the reaction a guanosine in 18S rRNA + S-adenosyl-L-methionine = an N(7)-methylguanosine in 18S rRNA + S-adenosyl-L-homocysteine. Functionally, S-adenosyl-L-methionine-dependent methyltransferase that specifically methylates the N(7) position of a guanine in 18S rRNA. Important for biogenesis end export of the 40S ribosomal subunit independent on its methyltransferase activity. S-adenosyl-L-methionine-dependent methyltransferase that specifically methylates the N(7) position of a guanine in 18S rRNA. Requires the methyltransferase adapter protein TRM112 for full rRNA methyltransferase activity. Involved in the pre-rRNA processing steps leading to small-subunit rRNA production independently of its RNA-modifying catalytic activity. Important for biogenesis end export of the 40S ribosomal subunit independent on its methyltransferase activity. The chain is Probable 18S rRNA (guanine-N(7))-methyltransferase from Dictyostelium discoideum (Social amoeba).